The primary structure comprises 204 residues: MNSGGSDSFDYLLQLTKALSAECRANRQETDRIELLLKRLAKQSGISYDNLSKNIIPDSWKDNASQKASPPTEAQKLISENFKLIYEIEKQEYFNTKAVALINNINEHFSYIKNFIDEQNAIRERNIATFSSEKLDERNKSLQQNYESLKTENEETKKKLHSIIKQFEKLLKEVDWDRISKDSRDYSRFKKQLEYLQDTYQVLK.

Component of a complex at least composed of FAR3, FAR7, FAR8, FAR10, FAR11 and VPS64.

The protein resides in the endoplasmic reticulum. In terms of biological role, participates in the control of the reentry into the cell cycle following pheromone treatment. The protein is Factor arrest protein 3 (FAR3) of Saccharomyces cerevisiae (strain ATCC 204508 / S288c) (Baker's yeast).